The sequence spans 253 residues: Triosephosphate isomerase, cytosolic (253 aa).

Residues asparagine 10 and lysine 12 each coordinate substrate. Residue histidine 96 is the Electrophile of the active site. The active-site Proton acceptor is glutamate 166.

This sequence belongs to the triosephosphate isomerase family. As to quaternary structure, homodimer.

It is found in the cytoplasm. The catalysed reaction is D-glyceraldehyde 3-phosphate = dihydroxyacetone phosphate. It functions in the pathway carbohydrate biosynthesis; gluconeogenesis. Its pathway is carbohydrate degradation; glycolysis; D-glyceraldehyde 3-phosphate from glycerone phosphate: step 1/1. This Oryza sativa subsp. japonica (Rice) protein is Triosephosphate isomerase, cytosolic (TPI).